Consider the following 411-residue polypeptide: Ferrochelatase, mitochondrial (411 aa).

The N-terminal 41 residues, methionine 1–serine 41, are a transit peptide targeting the mitochondrion. The segment at valine 34–lysine 55 is disordered. The segment covering serine 41–lysine 51 has biased composition (basic and acidic residues). Protoporphyrin IX contacts are provided by arginine 102, tyrosine 110, and serine 117. Residue cysteine 183 coordinates [2Fe-2S] cluster. Residues histidine 217 and aspartate 370 contribute to the active site. The [2Fe-2S] cluster site is built by cysteine 390, cysteine 393, and cysteine 398.

This sequence belongs to the ferrochelatase family. Homodimer. Homotetramer. It depends on [2Fe-2S] cluster as a cofactor.

It is found in the mitochondrion inner membrane. The enzyme catalyses heme b + 2 H(+) = protoporphyrin IX + Fe(2+). It functions in the pathway porphyrin-containing compound metabolism; protoheme biosynthesis; protoheme from protoporphyrin-IX: step 1/1. In terms of biological role, catalyzes the ferrous insertion into protoporphyrin IX. The polypeptide is Ferrochelatase, mitochondrial (Xenopus laevis (African clawed frog)).